The following is a 635-amino-acid chain: ATP-binding protein Uup (635 aa).

ABC transporter domains lie at 1–253 (MSLI…RVEE) and 320–546 (FEME…KTEE). ATP contacts are provided by residues 36–43 (GRNGAGKS) and 352–359 (GPNGCGKT). Residues 551–635 (KAETVKRSSS…EYLEALKNGG (85 aa)) form a C-terminal domain (CTD), binds DNA, required to complement a deletion mutant region. Residues 563 to 631 (SYKLQRELEQ…FERWEYLEAL (69 aa)) adopt a coiled-coil conformation.

The protein belongs to the ABC transporter superfamily. ABCF family. Uup subfamily.

The protein resides in the cytoplasm. The catalysed reaction is ATP + H2O = ADP + phosphate + H(+). With respect to regulation, ATPase activity inhibited by N-ethylmaleimide but not by vanadate. Probably plays a role in ribosome assembly or function; overexpression suppresses cold-sensitive growth of a bipA deletion. May be involved in resolution of branched DNA intermediates that result from template switching in postreplication gaps. Binds DNA at Holliday junctions. May be involved in the correct segregation of nucleoids. Has ATPase activity, binds DNA non-sequence specifically; the presence of DNA does not change the ATPase activity. Mutations in this gene cause an increase in RecA-independent precise excision of transposons and insertion elements, and also reduce bacteriophage Mu growth. Genetic interactions among priB, dam, lexA, nagC, polA, rdgB, rdgB, rep and uup link the PriA-PriB replication restart pathway to DNA double-strand break repair. This is ATP-binding protein Uup from Escherichia coli (strain K12).